The following is a 956-amino-acid chain: Dual specificity protein kinase YAK1 homolog (956 aa).

One can recognise a Protein kinase domain in the interval 122-464; sequence YIVKDLLGHG…PFQAAKHPFI (343 aa). ATP contacts are provided by residues 128–136 and K151; that span reads LGHGTFGQV. At S222 the chain carries Phosphoserine. The active-site Proton acceptor is D249. 3 disordered regions span residues 620 to 657, 672 to 781, and 806 to 956; these read LGTSPSQFTPNTNNQFLAGSPGHHGPTSPVRNSCHGSP, SAGY…NYSD, and GSTD…GSIA. Over residues 622 to 636 the composition is skewed to polar residues; that stretch reads TSPSQFTPNTNNQFL. Low complexity predominate over residues 672-691; the sequence is SAGYSGGSQSQDSSLSQAQG. 3 stretches are compositionally biased toward polar residues: residues 697–713, 725–757, and 806–817; these read FYQNEGYSGQFSGSPSR, QTQGGTTLSTGYSTHNNANSSLRSNMYNPSSTA, and GSTDASSYSRRF. The segment covering 818-830 has biased composition (low complexity); sequence NSNASTSSSNPTT. Polar residues-rich tracts occupy residues 838–849, 870–884, and 902–912; these read QAFSQVETGSPP, VSQNSPSRLGQQPPQ, and MNAQLPPSNTN. Positions 913-924 are enriched in low complexity; the sequence is SGGQQRSPRSSS. The span at 937 to 947 shows a compositional bias: polar residues; it reads NHVPNVPSTSH.

It belongs to the protein kinase superfamily. Ser/Thr protein kinase family. Post-translationally, autophosphorylated at Ser-222.

The catalysed reaction is L-seryl-[protein] + ATP = O-phospho-L-seryl-[protein] + ADP + H(+). It catalyses the reaction L-threonyl-[protein] + ATP = O-phospho-L-threonyl-[protein] + ADP + H(+). The enzyme catalyses L-tyrosyl-[protein] + ATP = O-phospho-L-tyrosyl-[protein] + ADP + H(+). Its function is as follows. Dual specificity protein kinase that phosphorylates ANN1, ANN2 and CP29B at serine and threonine residues, and ANN1, ANN2 and ANN4 at tyrosine residues. May regulate the phosphorylation status of annexin proteins. Acts as a positive regulator in abscisic acid (ABA)-mediated regulation of postgermination growth and drought response. May regulate the expression of ABA-responsive genes such as RD22, RD29A, LTI65/RD29B and RAB18. This Arabidopsis thaliana (Mouse-ear cress) protein is Dual specificity protein kinase YAK1 homolog.